We begin with the raw amino-acid sequence, 410 residues long: D-amino acid dehydrogenase (410 aa).

9–14 (GGGIVG) lines the FAD pocket.

Belongs to the DadA oxidoreductase family. The cofactor is FAD.

The protein localises to the cell inner membrane. It carries out the reaction a D-alpha-amino acid + a quinone + H2O = a 2-oxocarboxylate + a quinol + NH4(+). Functionally, catalyzes the oxidative deamination of D-amino acids. Has broad substrate specificity; is mostly active on D-proline, and to a lesser extent, on several other D-amino acids such as D-alanine, D-phenylalanine and D-serine. Mediates electron transport from D-proline to coenzyme Q1 in vitro, and is involved in the electron transport chain from D-proline to the c-type cytochrome in vivo. This chain is D-amino acid dehydrogenase, found in Helicobacter pylori (strain J99 / ATCC 700824) (Campylobacter pylori J99).